Here is a 201-residue protein sequence, read N- to C-terminus: 3-isopropylmalate dehydratase small subunit (201 aa).

It belongs to the LeuD family. LeuD type 1 subfamily. Heterodimer of LeuC and LeuD.

The enzyme catalyses (2R,3S)-3-isopropylmalate = (2S)-2-isopropylmalate. The protein operates within amino-acid biosynthesis; L-leucine biosynthesis; L-leucine from 3-methyl-2-oxobutanoate: step 2/4. Functionally, catalyzes the isomerization between 2-isopropylmalate and 3-isopropylmalate, via the formation of 2-isopropylmaleate. This is 3-isopropylmalate dehydratase small subunit from Afipia carboxidovorans (strain ATCC 49405 / DSM 1227 / KCTC 32145 / OM5) (Oligotropha carboxidovorans).